The chain runs to 168 residues: Prolyl-tRNA synthetase associated domain-containing protein 1 (168 aa).

This sequence belongs to the PRORSD1 family.

The sequence is that of Prolyl-tRNA synthetase associated domain-containing protein 1 (prorsd1p) from Xenopus laevis (African clawed frog).